A 302-amino-acid polypeptide reads, in one-letter code: Zinc transporter ZIP1 (302 aa).

Residues 1 to 6 (MEYLLQ) are Extracellular-facing. Residues 7-27 (VKIAALVGLLFLTLIFGFIPA) form a helical membrane-spanning segment. At 28 to 44 (RVKWFRDTDGTETHRTV) the chain is on the cytoplasmic side. The chain crosses the membrane as a helical span at residues 45-65 (LSLISCFAGGVFLSACFLDII). Residues 66 to 80 (PDYLSDINTELHARQ) lie on the Extracellular side of the membrane. Residues 81–101 (LETSFPLPEFIMAAGFFTVLI) traverse the membrane as a helical segment. Residues 102 to 158 (LERIVLNCKEMRATHEERTTLIPERKSGHGHGHGDGPDPESSGHHVHVDFQAHSPFR) lie on the Cytoplasmic side of the membrane. The disordered stretch occupies residues 123 to 145 (IPERKSGHGHGHGDGPDPESSGH). Residues 159 to 179 (SFMLFLSLSLHSIFEGLAIGL) form a helical membrane-spanning segment. The Extracellular segment spans residues 180 to 185 (QTTDPK). A helical membrane pass occupies residues 186-206 (VVEICIAILVHKSIIVFSLAV). Topologically, residues 207–216 (KLVQSAIPPL) are cytoplasmic. The helical transmembrane segment at 217 to 237 (WVAAYIGVFALMSPVGIAIGI) threads the bilayer. Topologically, residues 238–251 (SVMEAQLAAGPLIQ) are extracellular. The helical transmembrane segment at 252–272 (AILEGFAAGTFVYITFLEILP) threads the bilayer. Topologically, residues 273–281 (HELNSPGKQ) are cytoplasmic. Residues 282-302 (LLKVLFLLLGFSIMAALSFLG) traverse the membrane as a helical segment.

This sequence belongs to the ZIP transporter (TC 2.A.5) family. In terms of tissue distribution, highest levels in ovary, lower levels in intestine and gill, barely detected in kidney.

It localises to the cell membrane. The protein resides in the endoplasmic reticulum membrane. It carries out the reaction Zn(2+)(in) = Zn(2+)(out). In terms of biological role, transporter for the divalent cation Zn(2+). Mediates the influx of Zn(2+) into cells from extracellular space. The polypeptide is Zinc transporter ZIP1 (slc39a1) (Takifugu rubripes (Japanese pufferfish)).